The sequence spans 315 residues: MTLDQLRIASRRSQLAMVQTNWVRDELQREHPDLVITIEAMATQGDKILDVALAKIGDKGLFTKELEAQMLLGHAEIAVHSLKDLPTNLPDGLILGCITKREDPSDALVVNEKNQIHKLETLPEGSVVGTSSLRRLAQLRYHYPHLVFKDVRGNVITRLEKLDSGEYDCLILAAAGLQRLGFANRIHQLIPTDISLHAVGQGALGIECVSGQQKVLDILKTLEHESTSKRCLAERSFLRELEGGCQVPIGVRTEINNNELILEGMVASLDGKRLIRDIKKGSVSSAEEIGIDLANELKGRGAGEILEEIFKSARA.

An S-(dipyrrolylmethanemethyl)cysteine modification is found at Cys-245.

It belongs to the HMBS family. In terms of assembly, monomer. Dipyrromethane is required as a cofactor.

The enzyme catalyses 4 porphobilinogen + H2O = hydroxymethylbilane + 4 NH4(+). It participates in porphyrin-containing compound metabolism; protoporphyrin-IX biosynthesis; coproporphyrinogen-III from 5-aminolevulinate: step 2/4. The protein operates within porphyrin-containing compound metabolism; chlorophyll biosynthesis. In terms of biological role, tetrapolymerization of the monopyrrole PBG into the hydroxymethylbilane pre-uroporphyrinogen in several discrete steps. The protein is Porphobilinogen deaminase of Prochlorococcus marinus (strain NATL2A).